The following is a 503-amino-acid chain: Alpha-1,3/1,6-mannosyltransferase ALG2 (503 aa).

The next 2 membrane-spanning stretches (helical) occupy residues 64–84 and 112–132; these read VYGD…FATI and TCIP…CHFP. Asn-170, Asn-303, Asn-371, and Asn-400 each carry an N-linked (GlcNAc...) asparagine glycan. The chain crosses the membrane as a helical span at residues 443 to 463; sequence WEIFGISFSNFILHMAFIKIL.

It belongs to the glycosyltransferase group 1 family. Glycosyltransferase 4 subfamily. Interacts with ALG1.

Its subcellular location is the endoplasmic reticulum membrane. It carries out the reaction a beta-D-Man-(1-&gt;4)-beta-D-GlcNAc-(1-&gt;4)-alpha-D-GlcNAc-diphospho-di-trans,poly-cis-dolichol + GDP-alpha-D-mannose = an alpha-D-Man-(1-&gt;3)-beta-D-Man-(1-&gt;4)-beta-D-GlcNAc-(1-&gt;4)-alpha-D-GlcNAc-diphospho-di-trans,poly-cis-dolichol + GDP + H(+). The enzyme catalyses an alpha-D-Man-(1-&gt;3)-beta-D-Man-(1-&gt;4)-beta-D-GlcNAc-(1-&gt;4)-alpha-D-GlcNAc-diphospho-di-trans,poly-cis-dolichol + GDP-alpha-D-mannose = an alpha-D-Man-(1-&gt;3)-[alpha-D-Man-(1-&gt;6)]-beta-D-Man-(1-&gt;4)-beta-D-GlcNAc-(1-&gt;4)-alpha-D-GlcNAc-diphospho-di-trans,poly-cis-dolichol + GDP + H(+). Its pathway is protein modification; protein glycosylation. In terms of biological role, mannosylates Man(2)GlcNAc(2)-dolichol diphosphate and Man(1)GlcNAc(2)-dolichol diphosphate to form Man(3)GlcNAc(2)-dolichol diphosphate. The sequence is that of Alpha-1,3/1,6-mannosyltransferase ALG2 (ALG2) from Saccharomyces cerevisiae (strain ATCC 204508 / S288c) (Baker's yeast).